The chain runs to 389 residues: Succinate--CoA ligase [ADP-forming] subunit beta (389 aa).

One can recognise an ATP-grasp domain in the interval 9–244; the sequence is KQLLAEYGIP…KTQEDETEVT (236 aa). ATP-binding positions include Lys46, 53–55, Gly102, and Glu107; that span reads GRG. Residues Asn199 and Asp213 each coordinate Mg(2+). Substrate-binding positions include Asn264 and 321–323; that span reads GIV.

The protein belongs to the succinate/malate CoA ligase beta subunit family. Heterotetramer of two alpha and two beta subunits. It depends on Mg(2+) as a cofactor.

The enzyme catalyses succinate + ATP + CoA = succinyl-CoA + ADP + phosphate. It carries out the reaction GTP + succinate + CoA = succinyl-CoA + GDP + phosphate. The protein operates within carbohydrate metabolism; tricarboxylic acid cycle; succinate from succinyl-CoA (ligase route): step 1/1. Succinyl-CoA synthetase functions in the citric acid cycle (TCA), coupling the hydrolysis of succinyl-CoA to the synthesis of either ATP or GTP and thus represents the only step of substrate-level phosphorylation in the TCA. The beta subunit provides nucleotide specificity of the enzyme and binds the substrate succinate, while the binding sites for coenzyme A and phosphate are found in the alpha subunit. This Xanthomonas euvesicatoria pv. vesicatoria (strain 85-10) (Xanthomonas campestris pv. vesicatoria) protein is Succinate--CoA ligase [ADP-forming] subunit beta.